The chain runs to 146 residues: Acidic phospholipase A2 S5-32M (146 aa).

An N-terminal signal peptide occupies residues 1–19 (MYPAHLLVLLAVCVSLLGA). A propeptide spanning residues 20–27 (ASIPPQPL) is cleaved from the precursor. 7 disulfide bridges follow: Cys-38/Cys-98, Cys-54/Cys-145, Cys-56/Cys-72, Cys-71/Cys-126, Cys-78/Cys-119, Cys-87/Cys-112, and Cys-105/Cys-117. The Ca(2+) site is built by Tyr-55, Gly-57, and Gly-59. His-75 is a catalytic residue. Asp-76 contacts Ca(2+). The active site involves Asp-120.

This sequence belongs to the phospholipase A2 family. Group I subfamily. D49 sub-subfamily. Ca(2+) is required as a cofactor. In terms of tissue distribution, expressed by the venom gland.

It localises to the secreted. The enzyme catalyses a 1,2-diacyl-sn-glycero-3-phosphocholine + H2O = a 1-acyl-sn-glycero-3-phosphocholine + a fatty acid + H(+). In terms of biological role, snake venom phospholipase A2 (PLA2) that inhibits collagen-induced platelet aggregation. PLA2 catalyzes the calcium-dependent hydrolysis of the 2-acyl groups in 3-sn-phosphoglycerides. This is Acidic phospholipase A2 S5-32M from Austrelaps superbus (Lowland copperhead snake).